The chain runs to 950 residues: Leucine--tRNA ligase (950 aa).

The 'HIGH' region motif lies at Pro41 to His52. The 'KMSKS' region signature appears at Lys718–Ser722. An ATP-binding site is contributed by Lys721.

It belongs to the class-I aminoacyl-tRNA synthetase family.

The protein resides in the cytoplasm. It catalyses the reaction tRNA(Leu) + L-leucine + ATP = L-leucyl-tRNA(Leu) + AMP + diphosphate. This chain is Leucine--tRNA ligase, found in Rhodopirellula baltica (strain DSM 10527 / NCIMB 13988 / SH1).